A 147-amino-acid chain; its full sequence is Hemoglobin subunit gamma-1 (147 aa).

G2 carries the N-acetylglycine; in form Hb F1 modification. The Globin domain occupies H3–H147. T13 bears the Phosphothreonine mark. Residues S45, S51, and S53 each carry the phosphoserine modification. K60 bears the N6-acetyllysine mark. H64 is a heme b binding site. K83 is modified (N6-acetyllysine). H93 is a heme b binding site. C94 bears the S-nitrosocysteine mark. S140 carries the post-translational modification Phosphoserine.

This sequence belongs to the globin family. Heterotetramer of two alpha chains and two gamma chains in fetal hemoglobin (Hb F). In the case of deletions affecting one or more of the alpha chains, the excess gamma chains form homotetramers that exhibit neither Bohr effect nor heme-heme cooperativity (hemoglobin Bart's). Acetylation of Gly-2 converts Hb F to the minor Hb F1. Red blood cells.

Functionally, gamma chains make up the fetal hemoglobin F, in combination with alpha chains. This chain is Hemoglobin subunit gamma-1 (HBG1), found in Homo sapiens (Human).